A 293-amino-acid polypeptide reads, in one-letter code: Homoserine kinase (293 aa).

84 to 94 (PLSRGLGSSSA) contacts ATP.

Belongs to the GHMP kinase family. Homoserine kinase subfamily.

The protein localises to the cytoplasm. The enzyme catalyses L-homoserine + ATP = O-phospho-L-homoserine + ADP + H(+). It participates in amino-acid biosynthesis; L-threonine biosynthesis; L-threonine from L-aspartate: step 4/5. In terms of biological role, catalyzes the ATP-dependent phosphorylation of L-homoserine to L-homoserine phosphate. The chain is Homoserine kinase from Aliarcobacter butzleri (strain RM4018) (Arcobacter butzleri).